A 331-amino-acid polypeptide reads, in one-letter code: tRNA-cytidine(32) 2-sulfurtransferase (331 aa).

The segment at 1–33 (MNAPHMNDTAADAATLDDAAAPAGRPALTRREQ) is disordered. Low complexity predominate over residues 8 to 23 (DTAADAATLDDAAAPA). The PP-loop motif motif lies at 71–76 (SGGKDS). Cys146, Cys149, and Cys237 together coordinate [4Fe-4S] cluster.

The protein belongs to the TtcA family. As to quaternary structure, homodimer. The cofactor is Mg(2+). [4Fe-4S] cluster is required as a cofactor.

It localises to the cytoplasm. The enzyme catalyses cytidine(32) in tRNA + S-sulfanyl-L-cysteinyl-[cysteine desulfurase] + AH2 + ATP = 2-thiocytidine(32) in tRNA + L-cysteinyl-[cysteine desulfurase] + A + AMP + diphosphate + H(+). The protein operates within tRNA modification. Its function is as follows. Catalyzes the ATP-dependent 2-thiolation of cytidine in position 32 of tRNA, to form 2-thiocytidine (s(2)C32). The sulfur atoms are provided by the cysteine/cysteine desulfurase (IscS) system. The polypeptide is tRNA-cytidine(32) 2-sulfurtransferase (Burkholderia cenocepacia (strain HI2424)).